The sequence spans 227 residues: Cytochrome c oxidase subunit 2 (227 aa).

Over Met-1–Asn-22 the chain is Mitochondrial intermembrane. The helical transmembrane segment at Phe-23–Leu-44 threads the bilayer. Over Met-45–Glu-60 the chain is Mitochondrial matrix. A helical membrane pass occupies residues Val-61–Leu-81. Topologically, residues Arg-82–Ile-227 are mitochondrial intermembrane. Residues His-161, Cys-196, Glu-198, Cys-200, His-204, and Met-207 each coordinate Cu cation. Glu-198 provides a ligand contact to Mg(2+). Tyr-218 is subject to Phosphotyrosine.

The protein belongs to the cytochrome c oxidase subunit 2 family. In terms of assembly, component of the cytochrome c oxidase (complex IV, CIV), a multisubunit enzyme composed of 14 subunits. The complex is composed of a catalytic core of 3 subunits MT-CO1, MT-CO2 and MT-CO3, encoded in the mitochondrial DNA, and 11 supernumerary subunits COX4I, COX5A, COX5B, COX6A, COX6B, COX6C, COX7A, COX7B, COX7C, COX8 and NDUFA4, which are encoded in the nuclear genome. The complex exists as a monomer or a dimer and forms supercomplexes (SCs) in the inner mitochondrial membrane with NADH-ubiquinone oxidoreductase (complex I, CI) and ubiquinol-cytochrome c oxidoreductase (cytochrome b-c1 complex, complex III, CIII), resulting in different assemblies (supercomplex SCI(1)III(2)IV(1) and megacomplex MCI(2)III(2)IV(2)). Found in a complex with TMEM177, COA6, COX18, COX20, SCO1 and SCO2. Interacts with TMEM177 in a COX20-dependent manner. Interacts with COX20. Interacts with COX16. Cu cation serves as cofactor.

It localises to the mitochondrion inner membrane. It catalyses the reaction 4 Fe(II)-[cytochrome c] + O2 + 8 H(+)(in) = 4 Fe(III)-[cytochrome c] + 2 H2O + 4 H(+)(out). Functionally, component of the cytochrome c oxidase, the last enzyme in the mitochondrial electron transport chain which drives oxidative phosphorylation. The respiratory chain contains 3 multisubunit complexes succinate dehydrogenase (complex II, CII), ubiquinol-cytochrome c oxidoreductase (cytochrome b-c1 complex, complex III, CIII) and cytochrome c oxidase (complex IV, CIV), that cooperate to transfer electrons derived from NADH and succinate to molecular oxygen, creating an electrochemical gradient over the inner membrane that drives transmembrane transport and the ATP synthase. Cytochrome c oxidase is the component of the respiratory chain that catalyzes the reduction of oxygen to water. Electrons originating from reduced cytochrome c in the intermembrane space (IMS) are transferred via the dinuclear copper A center (CU(A)) of subunit 2 and heme A of subunit 1 to the active site in subunit 1, a binuclear center (BNC) formed by heme A3 and copper B (CU(B)). The BNC reduces molecular oxygen to 2 water molecules using 4 electrons from cytochrome c in the IMS and 4 protons from the mitochondrial matrix. The polypeptide is Cytochrome c oxidase subunit 2 (Mtco2) (Mus musculus (Mouse)).